The chain runs to 303 residues: Protoheme IX farnesyltransferase 2 (303 aa).

Transmembrane regions (helical) follow at residues 29–49 (VVALMLLTVLVGMCLSVPGIV), 51–71 (LQPLVAGMAGIAMMAGSAAAF), 96–118 (ISTTKAVTFAVSLGSLGFVVLYT), 123–143 (LTAWLTFASLIGYALVYTAYL), 150–170 (NIVIGGLAGAMPPLLGWTAIT), 177–197 (ALLLVIIIFTWTPPHFWALAI), 223–243 (CILLYTILLAIACLLPVLVGM), 244–264 (CGPIYLVGSTVLSCGFIYKAW), and 281–301 (FSIYHLMVLFIVLLVDHYFWV).

This sequence belongs to the UbiA prenyltransferase family. Protoheme IX farnesyltransferase subfamily.

The protein resides in the cell inner membrane. It carries out the reaction heme b + (2E,6E)-farnesyl diphosphate + H2O = Fe(II)-heme o + diphosphate. Its pathway is porphyrin-containing compound metabolism; heme O biosynthesis; heme O from protoheme: step 1/1. Its function is as follows. Converts heme B (protoheme IX) to heme O by substitution of the vinyl group on carbon 2 of heme B porphyrin ring with a hydroxyethyl farnesyl side group. The polypeptide is Protoheme IX farnesyltransferase 2 (Shewanella frigidimarina (strain NCIMB 400)).